Consider the following 509-residue polypeptide: Photosystem II CP47 reaction center protein (509 aa).

A run of 6 helical transmembrane segments spans residues 21–36 (AVHLMHTALVAGWAGS), 101–115 (IILSGMCFLAAIWHW), 140–156 (GIHLFLSGLLCFGFGAF), 203–218 (IAAGIFGIFAGIFHLT), 237–252 (VLSSSIAAVFFAAFVT), and 457–472 (NFALLFFFGHLWHGGR).

It belongs to the PsbB/PsbC family. PsbB subfamily. In terms of assembly, PSII is composed of 1 copy each of membrane proteins PsbA, PsbB, PsbC, PsbD, PsbE, PsbF, PsbH, PsbI, PsbJ, PsbK, PsbL, PsbM, PsbT, PsbX, PsbY, PsbZ, Psb30/Ycf12, at least 3 peripheral proteins of the oxygen-evolving complex and a large number of cofactors. It forms dimeric complexes. The cofactor is Binds multiple chlorophylls. PSII binds additional chlorophylls, carotenoids and specific lipids..

Its subcellular location is the plastid. It is found in the chloroplast thylakoid membrane. In terms of biological role, one of the components of the core complex of photosystem II (PSII). It binds chlorophyll and helps catalyze the primary light-induced photochemical processes of PSII. PSII is a light-driven water:plastoquinone oxidoreductase, using light energy to abstract electrons from H(2)O, generating O(2) and a proton gradient subsequently used for ATP formation. The chain is Photosystem II CP47 reaction center protein from Trieres chinensis (Marine centric diatom).